The primary structure comprises 493 residues: Cytochrome c-552 (493 aa).

A signal peptide spans 1–25 (MEKKLKSWQGWLLSGGSMVVVFVLG). Histidine 116 lines the heme c pocket. Residues cysteine 144, cysteine 147, and lysine 148 each contribute to the heme site. The heme c site is built by cysteine 182, cysteine 185, histidine 186, cysteine 224, cysteine 227, and histidine 228. Ca(2+) contacts are provided by glutamate 230, tyrosine 231, lysine 276, and glutamine 278. Tyrosine 231 contributes to the substrate binding site. Position 279 (histidine 279) interacts with substrate. Positions 290, 297, 300, 301, 315, 328, 331, 332, and 407 each coordinate heme c.

Belongs to the cytochrome c-552 family. Requires Ca(2+) as cofactor. It depends on heme c as a cofactor.

It is found in the periplasm. It carries out the reaction 6 Fe(III)-[cytochrome c] + NH4(+) + 2 H2O = 6 Fe(II)-[cytochrome c] + nitrite + 8 H(+). Its pathway is nitrogen metabolism; nitrate reduction (assimilation). In terms of biological role, catalyzes the reduction of nitrite to ammonia, consuming six electrons in the process. This is Cytochrome c-552 from Bacteroides thetaiotaomicron (strain ATCC 29148 / DSM 2079 / JCM 5827 / CCUG 10774 / NCTC 10582 / VPI-5482 / E50).